The following is a 768-amino-acid chain: Tripartite motif-containing protein 67 (768 aa).

Residues 7 to 42 (CPVCGSLFREPIILPCSHNVCLPCARTIAVQTPDGE) form an RING-type; degenerate zinc finger. A compositionally biased stretch (low complexity) spans 55–70 (AAAAATPPDQDAAAGA). 2 disordered regions span residues 55 to 74 (AAAA…TSGG) and 247 to 284 (QPPP…ASAP). Residues 201-248 (AICQLCDRTPPEPAATLCEQCDVLYCATCQLKCHPSRGPFAKHRLVQP) form a B box-type 1; degenerate zinc finger. Residues 247–257 (QPPPPPTPPEA) show a composition bias toward pro residues. A B box-type 2 zinc finger spans residues 285 to 327 (RKFPTCPEHEMENYSMYCVSCRSPVCYMCLEEGRHSKHEVKPL). Zn(2+) contacts are provided by Cys-290, His-293, Cys-313, and His-319. The stretch at 332–369 (KQHKAQLSQALNGVSDKAKEAKEFLVQLKNILQQIQEN) forms a coiled coil. In terms of domain architecture, COS spans 435-493 (IKEDDPSGFLQISDALIKRVQTSQEQWVKGALEPKVSAEFDLTLDSEPLLQAIHQLDFV). In terms of domain architecture, Fibronectin type-III spans 498–592 (PPVPLLQLEK…KTVVLQTSDV (95 aa)). The region spanning 574–765 (NSSGVGPYSK…VPTNLGRPKL (192 aa)) is the B30.2/SPRY domain.

It is found in the cytoplasm. The protein resides in the cytoskeleton. This is Tripartite motif-containing protein 67 (Trim67) from Mus musculus (Mouse).